The chain runs to 234 residues: Leucyl/phenylalanyl-tRNA--protein transferase (234 aa).

This sequence belongs to the L/F-transferase family.

It is found in the cytoplasm. The catalysed reaction is N-terminal L-lysyl-[protein] + L-leucyl-tRNA(Leu) = N-terminal L-leucyl-L-lysyl-[protein] + tRNA(Leu) + H(+). The enzyme catalyses N-terminal L-arginyl-[protein] + L-leucyl-tRNA(Leu) = N-terminal L-leucyl-L-arginyl-[protein] + tRNA(Leu) + H(+). It carries out the reaction L-phenylalanyl-tRNA(Phe) + an N-terminal L-alpha-aminoacyl-[protein] = an N-terminal L-phenylalanyl-L-alpha-aminoacyl-[protein] + tRNA(Phe). In terms of biological role, functions in the N-end rule pathway of protein degradation where it conjugates Leu, Phe and, less efficiently, Met from aminoacyl-tRNAs to the N-termini of proteins containing an N-terminal arginine or lysine. This Citrobacter koseri (strain ATCC BAA-895 / CDC 4225-83 / SGSC4696) protein is Leucyl/phenylalanyl-tRNA--protein transferase.